A 355-amino-acid polypeptide reads, in one-letter code: Uroporphyrinogen decarboxylase (355 aa).

Substrate-binding positions include 27-31, Asp77, Tyr154, Thr209, and His328; that span reads RQAGR.

The protein belongs to the uroporphyrinogen decarboxylase family. Homodimer.

The protein resides in the cytoplasm. The catalysed reaction is uroporphyrinogen III + 4 H(+) = coproporphyrinogen III + 4 CO2. It functions in the pathway porphyrin-containing compound metabolism; protoporphyrin-IX biosynthesis; coproporphyrinogen-III from 5-aminolevulinate: step 4/4. Functionally, catalyzes the decarboxylation of four acetate groups of uroporphyrinogen-III to yield coproporphyrinogen-III. The protein is Uroporphyrinogen decarboxylase of Aliivibrio salmonicida (strain LFI1238) (Vibrio salmonicida (strain LFI1238)).